A 250-amino-acid chain; its full sequence is Leucyl/phenylalanyl-tRNA--protein transferase (250 aa).

It belongs to the L/F-transferase family.

It localises to the cytoplasm. The enzyme catalyses N-terminal L-lysyl-[protein] + L-leucyl-tRNA(Leu) = N-terminal L-leucyl-L-lysyl-[protein] + tRNA(Leu) + H(+). It carries out the reaction N-terminal L-arginyl-[protein] + L-leucyl-tRNA(Leu) = N-terminal L-leucyl-L-arginyl-[protein] + tRNA(Leu) + H(+). It catalyses the reaction L-phenylalanyl-tRNA(Phe) + an N-terminal L-alpha-aminoacyl-[protein] = an N-terminal L-phenylalanyl-L-alpha-aminoacyl-[protein] + tRNA(Phe). Its function is as follows. Functions in the N-end rule pathway of protein degradation where it conjugates Leu, Phe and, less efficiently, Met from aminoacyl-tRNAs to the N-termini of proteins containing an N-terminal arginine or lysine. The chain is Leucyl/phenylalanyl-tRNA--protein transferase from Xanthomonas oryzae pv. oryzae (strain MAFF 311018).